A 506-amino-acid chain; its full sequence is MSNKDLLGRRNFIKGMGAAAGVAMAAPALAVSENANGVKWDKEVEVLIIGSGFAGLAAAIEATRKGAKDVHIFEKMSYFGGNSAINGGLFAAPDTPMQKQEGVKDSVDTMVADQLAAGRGIADEALLRHVAEHAVEALQMTLDAGSEYHPYLQQLGGHSVARTYQTTVSCGAGITQPLLQECRKLGVHTHNRAKFDGFILDEKGGVVGVKMREGYYFDKPESGKLVRIKARRGVIMATGGFAQNINMRMAQDPTLTAEVGCTNAPGATGEGMFEMFRLGAVPVHLAHIQSGPWASPDEGGFGYVSNYSIYNFPHSIAIDRLTGKRFMNEIADRKTRADAELNCRDAQGNPLPPILITSYEDSKQHPNTKKVLKYNVGWKFDSIDALAKHFDVPLAPLKKQIAEYNDYVKTQSDPQFGKNMTEAKGKFIQAPFTVVRLWPKVHYCQGGVQINTNAEVKDSLTGKPISGLYAAGEVCGGIHGVSRLGSCSIPECMVMGMTAARIMMQA.

Residues methionine 1–alanine 30 constitute a signal peptide (tat-type signal). The FAD site is built by alanine 54, glutamate 74, asparagine 82, glycine 87, and glycine 88. Catalysis depends on arginine 333, which acts as the Proton donor. The FAD site is built by glutamate 473 and isoleucine 489.

This sequence belongs to the FAD-dependent oxidoreductase 2 family. FRD/SDH subfamily. The ArdAB flavocytochrome c is composed of a FAD-containing subunit (ArdA) and a heme c-containing subunit (ArdB). The cofactor is FAD. Post-translationally, predicted to be exported by the Tat system. The position of the signal peptide cleavage has not been experimentally proven.

The protein resides in the periplasm. With respect to regulation, methacrylate acts as a competitive inhibitor of the acrylate reductase activity and suppresses the reductase activity in dose-dependent manner. Its function is as follows. FAD-containing subunit of the ArdAB flavocytochrome c, which catalyzes the reduction of acrylate to propanoate and supports dimethylsulfoniopropionate-dependent anaerobic respiration. In vitro, can use the artificial electron donor methyl viologen. The natural electron donor is probably a low-potential cytochrome c. Also shows weak activity toward methacrylate in vitro (at a 22-fold lower rate) but cannot use other tested 2-enoates, including crotonic, fumaric, sorbic, urocanic, cinnamic, p-coumaric, caffeic or ferulic acids. The protein catalyzes a unidirectional reaction and cannot oxidize propanoate with phenazine metasulfate and dichlorophenolindophenol as electron acceptors. The protein is Acrylate reductase flavoprotein subunit of Shewanella woodyi (strain ATCC 51908 / MS32).